The following is a 428-amino-acid chain: MQSLMLQPISYINGTINLPGSKSVSNRALLLAAFAKGATCLTNLLDSDDIRHMLNALAALGISYRLSDDRTCCEVDGIGGLITHQGPIELFLGNAGTAMRPLTAALCLGKNDVVLTGEPRMKERPIGHLVDALRQGGAEIDYLEQENYPPLHVKGGFVGGKVMVDGRVSSQFLTALLMAAPLAENDSEIHIQGELVSKPYIDITLALMKSFGITINHDQYQIFHIKGRQQYVSPGHYLVEGDASSASYFLAAAAIKGGTVRVTGIGKNSLQGDTKFANVLEKMGAKIRWGDDFVECERGTLTGIDMDMNEIPDAAMTIATTALFAAGETVIRNIYNWRVKETDRLHAMATELRKVGAEVEEGVDYIRITPPPRLLPAEIGTYNDHRMAMCFSLVALSDTPVTILDPGCTAKTFPDYFNQLERLSQRKS.

3-phosphoshikimate contacts are provided by K22, S23, and R27. Phosphoenolpyruvate is bound at residue K22. Phosphoenolpyruvate-binding residues include G96 and R124. S169, S170, Q171, S197, D313, N336, and K340 together coordinate 3-phosphoshikimate. Q171 is a phosphoenolpyruvate binding site. The active-site Proton acceptor is D313. R344, R386, and K411 together coordinate phosphoenolpyruvate.

It belongs to the EPSP synthase family. Monomer.

The protein resides in the cytoplasm. The catalysed reaction is 3-phosphoshikimate + phosphoenolpyruvate = 5-O-(1-carboxyvinyl)-3-phosphoshikimate + phosphate. The protein operates within metabolic intermediate biosynthesis; chorismate biosynthesis; chorismate from D-erythrose 4-phosphate and phosphoenolpyruvate: step 6/7. In terms of biological role, catalyzes the transfer of the enolpyruvyl moiety of phosphoenolpyruvate (PEP) to the 5-hydroxyl of shikimate-3-phosphate (S3P) to produce enolpyruvyl shikimate-3-phosphate and inorganic phosphate. This Photorhabdus laumondii subsp. laumondii (strain DSM 15139 / CIP 105565 / TT01) (Photorhabdus luminescens subsp. laumondii) protein is 3-phosphoshikimate 1-carboxyvinyltransferase.